Consider the following 356-residue polypeptide: Putative zinc finger protein At1g68190 (356 aa).

Residues Cys14, Cys17, Cys37, His42, Cys57, Cys60, Cys80, and His85 each coordinate Zn(2+). The segment at 14–56 (CEFCKAYRAVVYCIADTANLCLTCDAKVHSANSLSGRHLRTVL) adopts a B box-type 1; atypical zinc-finger fold. Residues 57 to 97 (CDSCKNQPCVVRCFDHKMFLCHGCNDKFHGGGSSEHRRRDL) form a B box-type 2; atypical zinc finger. The disordered stretch occupies residues 159-178 (ENGSSSLTERGDPSPLELPK).

Belongs to the CONSTANS family.

It localises to the nucleus. The sequence is that of Putative zinc finger protein At1g68190 from Arabidopsis thaliana (Mouse-ear cress).